Reading from the N-terminus, the 489-residue chain is Lysine--tRNA ligase (489 aa).

Residues Glu398 and Glu405 each contribute to the Mg(2+) site.

It belongs to the class-II aminoacyl-tRNA synthetase family. As to quaternary structure, homodimer. It depends on Mg(2+) as a cofactor.

Its subcellular location is the cytoplasm. The catalysed reaction is tRNA(Lys) + L-lysine + ATP = L-lysyl-tRNA(Lys) + AMP + diphosphate. The protein is Lysine--tRNA ligase of Moorella thermoacetica (strain ATCC 39073 / JCM 9320).